Reading from the N-terminus, the 352-residue chain is tRNA pseudouridine synthase D (352 aa).

The Nucleophile role is filled by Asp-81. One can recognise a TRUD domain in the interval 157–303 (GVPNYFGTQR…MDHERRILRL (147 aa)).

This sequence belongs to the pseudouridine synthase TruD family.

It carries out the reaction uridine(13) in tRNA = pseudouridine(13) in tRNA. Responsible for synthesis of pseudouridine from uracil-13 in transfer RNAs. This chain is tRNA pseudouridine synthase D, found in Pseudomonas putida (strain ATCC 47054 / DSM 6125 / CFBP 8728 / NCIMB 11950 / KT2440).